A 283-amino-acid chain; its full sequence is Putative UTP--glucose-1-phosphate uridylyltransferase (283 aa).

The protein belongs to the UDPGP type 2 family.

The enzyme catalyses alpha-D-glucose 1-phosphate + UTP + H(+) = UDP-alpha-D-glucose + diphosphate. The chain is Putative UTP--glucose-1-phosphate uridylyltransferase from Methanocaldococcus jannaschii (strain ATCC 43067 / DSM 2661 / JAL-1 / JCM 10045 / NBRC 100440) (Methanococcus jannaschii).